The chain runs to 926 residues: Vacuolar protein sorting-associated protein 39 homolog (926 aa).

Residues 15 to 306 form the CNH domain; that stretch reads PVEVTCLAFQ…MTLCSGARGQ (292 aa). A CHCR repeat occupies 590 to 768; the sequence is DETEMARNLN…LFRTLVHPNQ (179 aa).

The protein belongs to the VAM6/VPS39 family. As to quaternary structure, probable core component of the homotypic fusion and vacuole protein sorting (HOPS) complex consisting of the core class C Vps proteins vps-11, vps-16, vps-18, and which further associates with vps-33.1, vps-39 and vps-41. May interact with lgg-2. Interacts with cuti-1.

It localises to the cytoplasm. Its subcellular location is the lysosome membrane. It is found in the late endosome membrane. The protein localises to the late endosome. The protein resides in the lysosome. In terms of biological role, plays a role in vesicle-mediated protein trafficking to lysosomal compartments including the endocytic membrane transport and autophagic pathways. Believed to act in part as a component of the putative HOPS endosomal tethering complex which is proposed to be involved in the rab-5-to-rab-7 endosome conversion probably implicating sand-1, and via binding SNAREs and SNARE complexes to mediate tethering and docking events during SNARE-mediated membrane fusion. The HOPS complex is proposed to be recruited to rab-7 on the late endosomal membrane and to regulate late endocytic, phagocytic and autophagic traffic towards lysosomes. Involved in homotypic vesicle fusions between late endosomes and in heterotypic fusions between late endosomes and lysosomes. Required for fusion of endosomes. In association with lgg-2 mediates the tethering of autophagosomes with lysosomes to form autolysosomes. Within the HOPS complex, contributes to the normal development of gut granules in embryonic and adult intestinal cells. The chain is Vacuolar protein sorting-associated protein 39 homolog from Caenorhabditis elegans.